The primary structure comprises 349 residues: MGVQEKDPLLQLSLPPGFRFYPTDEELLVQYLCKKVAGHDFPLQIIGEIDLYKFDPWVLPSKATFGEKEWYFFSPRDRKYPNGSRPNRVAGSGYWKATGTDKVITSQGRKVGIKKALVFYVGKAPKGSKTNWIMHEYRLFESSRKNNGSSKLDEWVLCRIYKKNSSGPKPLMSGLHSSNEYSHGSSTSSSSQFDDMLESLPEMDDRFSNLPRLNSLKAEKFNLDRLDSANFDWAILAGLKPMPELGPANQAPGVQGQAQGHVNNHIHSDNNNMNFLNDVYAHPPNFRGNTKVESINLDEEVESGKRNQRIDQSSYFQQSLNGFSQAYTNNVDQFGIQCPNQTLNLGFKQ.

The NAC domain maps to 14–163 (LPPGFRFYPT…EWVLCRIYKK (150 aa)). The DNA-binding element occupies 111-169 (VGIKKALVFYVGKAPKGSKTNWIMHEYRLFESSRKNNGSSKLDEWVLCRIYKKNSSGPK). A disordered region spans residues 169-194 (KPLMSGLHSSNEYSHGSSTSSSSQFD). Low complexity predominate over residues 177-191 (SSNEYSHGSSTSSSS).

Expressed in guard cells of the epidermis.

Its subcellular location is the nucleus. Its function is as follows. Transcription factor involved in abscisic acid-mediated stomatal closure. Regulates the expression of NCED1, a gene involved in the biosynthesis of abscisic acid (ABA). Required for the stomatal closure induced by the bacterial pathogen Pseudomonas syringae pv tomato DC3000, but not for stomatal reopening. This is NAC domain-containing protein JA2 from Solanum lycopersicum (Tomato).